The following is a 96-amino-acid chain: Uteroglobin (96 aa).

The signal sequence occupies residues 1-21 (MKIAITMAVVMLSVCCSSASS).

The protein belongs to the secretoglobin family. Antiparallel homodimer; disulfide-linked. Interaction with LMBR1L is controversial.

Its subcellular location is the secreted. Binds phosphatidylcholine, phosphatidylinositol, polychlorinated biphenyls (PCB) and weakly progesterone, potent inhibitor of phospholipase A2. This chain is Uteroglobin (SCGB1A1), found in Mesocricetus auratus (Golden hamster).